The primary structure comprises 268 residues: L-proline trans-4-hydroxylase (268 aa).

Fe cation-binding residues include His-113, Asp-115, and His-218.

Belongs to the PhyH family. As to quaternary structure, monomer. Fe(2+) is required as a cofactor.

It carries out the reaction L-proline + 2-oxoglutarate + O2 = trans-4-hydroxy-L-proline + succinate + CO2. It functions in the pathway antibiotic biosynthesis. Competitively inhibited by pyridine-2,4-dicarboxylate. Inhibited by diethyl pyrocarbonate (DEPC), 3,4-dihydroxybenzoate, pyridine-2,5-dicarboxylate, alpha,alpha'-dipyridyl, and some metal ions such as Co(2+) and Zn(2+). Its function is as follows. Involved in the biosynthesis of the peptidolactone antibiotic etamycin (viridogrisein). Catalyzes the hydroxylation of free L-proline at the C-4 position to yield trans-4-hydroxy-L-proline. This chain is L-proline trans-4-hydroxylase, found in Streptomyces griseoviridis.